We begin with the raw amino-acid sequence, 111 residues long: MSLLPRRAPPVSMRLLAAALLLLLLALYTARVDGSKCKCSRKGPKIRYSDVKKLEMKPKYPHCEEKMVIITTKSVSRYRGQEHCLHPKLQSTKRFIKWYNAWNEKRRVYEE.

The N-terminal stretch at 1 to 34 (MSLLPRRAPPVSMRLLAAALLLLLLALYTARVDG) is a signal peptide. 2 cysteine pairs are disulfide-bonded: cysteine 37-cysteine 63 and cysteine 39-cysteine 84. The short motif at 67 to 81 (MVIITTKSVSRYRGQ) is the D-box element.

Belongs to the intercrine alpha (chemokine CxC) family. Ubiquitinated, followed by degradation by the proteasome. In terms of tissue distribution, expressed in heart, brain, placenta, lung, liver, skeletal muscle, kidney and pancreas. Highly expressed in normal tissue without inflammatory stimuli and infrequently expressed in cancer cell lines. Weakly expressed in monocyte-derived dendritic cells. Not detected in lung or unstimulated peripheral blood lymphocytes.

It is found in the secreted. Its function is as follows. Potent chemoattractant for neutrophils, and weaker for dendritic cells. Not chemotactic for T-cells, B-cells, monocytes, natural killer cells or granulocytes. Does not inhibit proliferation of myeloid progenitors in colony formation assays. This Homo sapiens (Human) protein is C-X-C motif chemokine 14 (CXCL14).